The primary structure comprises 175 residues: MSKLNYIKGDLFSHKSSASSILAHACNCRGSWGAGVAAIFKKQFPSTYKLYVEHCKKHASNPSGLLGSTYLIKSESSDPGNSGRENVAYVACMFTSDAFGRRKNSADDIVENTDKSMLHLESQLAELAKTEPIEQQDGVNVVNMPKINAGLFNVPWEETEAVLKKHQVLINVYVI.

The 175-residue stretch at 1 to 175 (MSKLNYIKGD…HQVLINVYVI (175 aa)) folds into the Macro domain. Residues 9–11 (GDL), 25–27 (ACN), 32–37 (WGAGVA), and 147–153 (INAGLFN) contribute to the substrate site.

The protein belongs to the POA1 family.

The enzyme catalyses ADP-alpha-D-ribose 1''-phosphate + H2O = ADP-D-ribose + phosphate. Highly specific phosphatase involved in the metabolism of ADP-ribose 1''-phosphate (Appr1p) which is produced as a consequence of tRNA splicing. This is ADP-ribose 1''-phosphate phosphatase (POA1) from Meyerozyma guilliermondii (strain ATCC 6260 / CBS 566 / DSM 6381 / JCM 1539 / NBRC 10279 / NRRL Y-324) (Yeast).